A 148-amino-acid chain; its full sequence is uncharacterized protein (148 aa).

The N-terminal stretch at 1 to 19 is a signal peptide; that stretch reads MLSNAKLLLSLAMASTALG. N-linked (GlcNAc...) asparagine glycosylation is found at Asn41 and Asn59. Asn127 carries GPI-anchor amidated asparagine lipidation. Positions 128–148 are cleaved as a propeptide — removed in mature form; that stretch reads AANARAIPGALGLAGAVMMLL.

It belongs to the SED1 family. The GPI-anchor is attached to the protein in the endoplasmic reticulum and serves to target the protein to the cell surface. There, the glucosamine-inositol phospholipid moiety is cleaved off and the GPI-modified mannoprotein is covalently attached via its lipidless GPI glycan remnant to the 1,6-beta-glucan of the outer cell wall layer.

The protein localises to the secreted. It localises to the cell wall. It is found in the membrane. Its function is as follows. Cell wall protein that plays a role in adaptation and resistance to cell wall stress. This is an uncharacterized protein from Saccharomyces cerevisiae (strain ATCC 204508 / S288c) (Baker's yeast).